The following is a 957-amino-acid chain: Iron-responsive element-binding protein 2 (957 aa).

Residues Cys506, Cys572, and Cys575 each coordinate [4Fe-4S] cluster.

The protein belongs to the aconitase/IPM isomerase family. [4Fe-4S] cluster serves as cofactor. In terms of processing, ubiquitinated and degraded by the proteasome in presence of high level of iron and oxygen.

The protein localises to the cytoplasm. Its function is as follows. RNA-binding protein that binds to iron-responsive elements (IRES), which are stem-loop structures found in the 5'-UTR of ferritin, and delta aminolevulinic acid synthase mRNAs, and in the 3'-UTR of transferrin receptor mRNA. Binding to the IRE element in ferritin results in the repression of its mRNA translation. Binding of the protein to the transferrin receptor mRNA inhibits the degradation of this otherwise rapidly degraded mRNA. In Xenopus tropicalis (Western clawed frog), this protein is Iron-responsive element-binding protein 2 (ireb2).